The primary structure comprises 373 residues: Erythronate-4-phosphate dehydrogenase (373 aa).

Serine 45 and threonine 67 together coordinate substrate. NAD(+) contacts are provided by residues aspartate 147, 207–209 (ASR), and aspartate 233. The active site involves arginine 209. Glutamate 238 is an active-site residue. The active-site Proton donor is histidine 255. Glycine 258 lines the NAD(+) pocket.

Belongs to the D-isomer specific 2-hydroxyacid dehydrogenase family. PdxB subfamily. As to quaternary structure, homodimer.

Its subcellular location is the cytoplasm. The catalysed reaction is 4-phospho-D-erythronate + NAD(+) = (R)-3-hydroxy-2-oxo-4-phosphooxybutanoate + NADH + H(+). The protein operates within cofactor biosynthesis; pyridoxine 5'-phosphate biosynthesis; pyridoxine 5'-phosphate from D-erythrose 4-phosphate: step 2/5. Catalyzes the oxidation of erythronate-4-phosphate to 3-hydroxy-2-oxo-4-phosphonooxybutanoate. The protein is Erythronate-4-phosphate dehydrogenase of Pseudoalteromonas translucida (strain TAC 125).